Consider the following 247-residue polypeptide: Ubiquinone biosynthesis O-methyltransferase (247 aa).

Positions 39, 70, 91, and 134 each coordinate S-adenosyl-L-methionine.

The protein belongs to the methyltransferase superfamily. UbiG/COQ3 family.

It carries out the reaction a 3-demethylubiquinol + S-adenosyl-L-methionine = a ubiquinol + S-adenosyl-L-homocysteine + H(+). The enzyme catalyses a 3-(all-trans-polyprenyl)benzene-1,2-diol + S-adenosyl-L-methionine = a 2-methoxy-6-(all-trans-polyprenyl)phenol + S-adenosyl-L-homocysteine + H(+). It functions in the pathway cofactor biosynthesis; ubiquinone biosynthesis. Functionally, O-methyltransferase that catalyzes the 2 O-methylation steps in the ubiquinone biosynthetic pathway. The polypeptide is Ubiquinone biosynthesis O-methyltransferase (Cereibacter sphaeroides (strain ATCC 17023 / DSM 158 / JCM 6121 / CCUG 31486 / LMG 2827 / NBRC 12203 / NCIMB 8253 / ATH 2.4.1.) (Rhodobacter sphaeroides)).